The primary structure comprises 501 residues: Lysine--tRNA ligase (501 aa).

Residues Glu-402 and Glu-409 each contribute to the Mg(2+) site.

Belongs to the class-II aminoacyl-tRNA synthetase family. Homodimer. Requires Mg(2+) as cofactor.

The protein resides in the cytoplasm. The enzyme catalyses tRNA(Lys) + L-lysine + ATP = L-lysyl-tRNA(Lys) + AMP + diphosphate. The polypeptide is Lysine--tRNA ligase (Helicobacter pylori (strain P12)).